The sequence spans 252 residues: Trans-aconitate 2-methyltransferase (252 aa).

The protein belongs to the methyltransferase superfamily. Tam family.

It is found in the cytoplasm. It carries out the reaction trans-aconitate + S-adenosyl-L-methionine = (E)-3-(methoxycarbonyl)pent-2-enedioate + S-adenosyl-L-homocysteine. In terms of biological role, catalyzes the S-adenosylmethionine monomethyl esterification of trans-aconitate. The polypeptide is Trans-aconitate 2-methyltransferase (Escherichia coli (strain UTI89 / UPEC)).